The primary structure comprises 698 residues: Superoxide-generating NADPH oxidase heavy chain subunit B (698 aa).

2 disordered regions span residues 1–68 (MNEK…NITP) and 134–158 (NDQV…NNKN). Over 1–184 (MNEKKELQQE…KIRGWWWHRG (184 aa)) the chain is Cytoplasmic. Composition is skewed to polar residues over residues 16 to 25 (FQTPKNQQLE) and 33 to 53 (EISS…PISQ). 2 stretches are compositionally biased toward low complexity: residues 54 to 65 (NDNSNNENESLN) and 138 to 156 (NSNT…TNNN). Residues 185–205 (ISTYIMLFYIALNIGVGVHMF) traverse the membrane as a helical segment. The Extracellular portion of the chain corresponds to 206–229 (YNMYHSDIFKFLGLSFCFSRTAAR). Positions 225–375 (RTAARLINLN…LFIPFYILLC (151 aa)) constitute a Ferric oxidoreductase domain. The chain crosses the membrane as a helical span at residues 230 to 250 (LINLNSAVILLPVLRNFLSWL). At 251-269 (RGTIVNNYIPIDKHLNFHK) the chain is on the cytoplasmic side. The heme site is built by His268 and His282. A helical membrane pass occupies residues 270–290 (LCAFMLFCCTIIHCVGHYISF). The Extracellular segment spans residues 291 to 324 (KKINDDVLKIDDGKSVAGDYLNININNFPDEKYL). Residues 325–345 (FFKSVPGITGHIMLLILILIV) traverse the membrane as a helical segment. The Cytoplasmic portion of the chain corresponds to 346–355 (SSSMWRIRRP). Residues 356–376 (MFEIFWYVHHLFIPFYILLCF) traverse the membrane as a helical segment. The heme site is built by His364 and His377. The Extracellular segment spans residues 377–388 (HGYSKILKKDPQ). The helical transmembrane segment at 389–409 (SWMWIIAPFILYSIERLIRIA) threads the bilayer. An FAD-binding FR-type domain is found at 404–528 (RLIRIARSKK…DGPFGAPAEN (125 aa)). Residues 410–698 (RSKKRVILEK…CHLIFHKENF (289 aa)) lie on the Cytoplasmic side of the membrane. 460-466 (HPFTITS) is a binding site for FAD.

In terms of assembly, composed of a heavy chain and a light chain. FAD is required as a cofactor.

The protein localises to the membrane. Critical component of the membrane-bound oxidase that generates superoxide. It is the terminal component of a respiratory chain that transfers single electrons from cytoplasmic NADPH across the plasma membrane to molecular oxygen on the exterior. The polypeptide is Superoxide-generating NADPH oxidase heavy chain subunit B (noxB) (Dictyostelium discoideum (Social amoeba)).